The primary structure comprises 819 residues: Protein SCARECROW (819 aa).

4 disordered regions span residues 6-49 (LFNG…HSER), 65-136 (HNNN…INNN), 212-231 (SQNN…RNNT), and 393-420 (PLST…TTTT). Positions 15–33 (TTPDETNNNSTSNSSNIST) are enriched in low complexity. Polar residues predominate over residues 79–98 (RTNNTSSLNCSLPATTQKGV). Residues 99–136 (TTTTTTTLASSGNNNNNNNNNNNYHYHNNNNNSIINNN) are compositionally biased toward low complexity. Residues 418 to 448 (TTTSAELALARKKKEEIKEQKKKDEEGLHLL) are a coiled coil. The GRAS domain occupies 438–806 (KKKDEEGLHL…LCLLTASAWR (369 aa)). Positions 445–507 (LHLLTLLLQC…RLVSSCLGIY (63 aa)) are leucine repeat I (LRI). Positions 452-456 (LQCAE) match the LxCxE motif motif. Residues 526-591 (FQVFNGISPF…GGPPYVRLTG (66 aa)) form a VHIID region. The VHIID motif lies at 557–561 (VHIID). The leucine repeat II (LRII) stretch occupies residues 601 to 633 (ATGKRLSDFANKLGLPFEFFPVAEKVGNIDVEK). The segment at 642-729 (VAVHWLQHSL…QQLLSREIRN (88 aa)) is PFYRE. The tract at residues 732–806 (AVGGPSRSGE…LCLLTASAWR (75 aa)) is SAW.

This sequence belongs to the GRAS family. In terms of tissue distribution, expressed in shoot apical meristem, leaf primordia, between the cortex and the differentiating vessels in lower shoots and in root endodermis.

It is found in the nucleus. In terms of biological role, putative transcription factor involved in asymmetric cell division. This Pisum sativum (Garden pea) protein is Protein SCARECROW (SCR).